The sequence spans 191 residues: LHFPL tetraspan subfamily member 7 protein (191 aa).

The next 4 helical transmembrane spans lie at 6-26 (MGSL…FSLM), 72-92 (IAAV…VLVL), 112-132 (YAQI…PFNL), and 154-174 (LGWG…LPFI).

The protein belongs to the TMEM211 family.

The protein resides in the membrane. The polypeptide is LHFPL tetraspan subfamily member 7 protein (lhfpl7) (Xenopus tropicalis (Western clawed frog)).